Reading from the N-terminus, the 118-residue chain is Phosphoribosyl-AMP cyclohydrolase (118 aa).

Asp-87 is a binding site for Mg(2+). Cys-88 contributes to the Zn(2+) binding site. Asp-89 and Asp-91 together coordinate Mg(2+). 2 residues coordinate Zn(2+): Cys-104 and Cys-111.

The protein belongs to the PRA-CH family. In terms of assembly, homodimer. Mg(2+) serves as cofactor. Zn(2+) is required as a cofactor.

The protein localises to the cytoplasm. The enzyme catalyses 1-(5-phospho-beta-D-ribosyl)-5'-AMP + H2O = 1-(5-phospho-beta-D-ribosyl)-5-[(5-phospho-beta-D-ribosylamino)methylideneamino]imidazole-4-carboxamide. It participates in amino-acid biosynthesis; L-histidine biosynthesis; L-histidine from 5-phospho-alpha-D-ribose 1-diphosphate: step 3/9. Functionally, catalyzes the hydrolysis of the adenine ring of phosphoribosyl-AMP. The sequence is that of Phosphoribosyl-AMP cyclohydrolase from Corynebacterium glutamicum (strain ATCC 13032 / DSM 20300 / JCM 1318 / BCRC 11384 / CCUG 27702 / LMG 3730 / NBRC 12168 / NCIMB 10025 / NRRL B-2784 / 534).